The sequence spans 163 residues: Nucleotide-binding protein GTNG_0630 (163 aa).

It belongs to the YajQ family.

Nucleotide-binding protein. This chain is Nucleotide-binding protein GTNG_0630, found in Geobacillus thermodenitrificans (strain NG80-2).